The following is a 992-amino-acid chain: MSPAMANPRVRKFNPIAFTPLPVTFITTIVYLAVLILVLVTYLVVPPAPTLEMSPKGVNLTEAWRDLQHLTEGFHPYNSRRNDDVHAWLLHRIEAIVRESAAADGGPEVFVFDDNLSNLTYSNGGVSKSPIVGVYFESTNIIVYIRGSEDDPQNWWEWSNGKPKGKGGVLVNAHYDSVSTGYGATDDGMGVVSLLQLLRYFTTAGNKPRKGLVLLFNNGEEDYLNGARVYSQHAMSNFTHTFLNLEGAGAGGRACLFRSTDTEVTRFYKNAKHPFGSVLAGDGFKLGLIRSQTDYVVFNGVLGLRGLDVSFIAPRSRYHTDQDDARHTNVDSLWHMLSVAIGTTEGLVSYTGTDFDSKTTDQDKVNSGGGTLGVWFDIFGSAFAVFRLHTLFALSVTLLVIGPLVLFITSIALSKTDRMYLFSMSKSLGGASETVSLRGLRGLFRTPIILTVTTVISIGLAYLLEKINPYIVHSSQFAVWSMMLSVWIFVAWFLARVADFFRPSALHRAYSYTWIFIVTWIMLVISTVYANQKGIAAGYFTFFYFAAVFLATWVSYLELFSLPRKGYYARQASRRQRRRSSSLSSRLLTPSADELPSDIGPNGAENVGDPDETDPTESTSLLRGQRTTFANYRTGGDDGVTEYTAEDEHVREASIFGHEQSWSWTLPRWTWILQLLLLAPIVIILVGQVGLLLTTAMSQIGSDGVSTFIVYLACALFSTLLFAPLLPFIHRFTYHVPIFLLLIFIGTLIYNLVAFPFSPANRLKIFFIQEVNLDDGTNKVSLTGIQPYLTDTINAIPSAAGQTANCTQGPFGSLVRCSWSGLPPRVVKEDPGNDQTMGPYTWISYNITRTVGKNEARIKVSGRNTRACKLKFDNPVADYRISGSAVDHRLPHTSRQGVEEIRLWTRTWENTWVVDVDWHSNPVNPGESKDGDEKQDVSKNELSGKVICLWSDNNESGVIPALDEVRLYAPAWVAISKSADGLVEASHDFIIQ.

The Cytoplasmic segment spans residues M1 to T24. The chain crosses the membrane as a helical span at residues F25–V45. Over P46–T390 the chain is Vacuolar. N59, N115, and N118 each carry an N-linked (GlcNAc...) asparagine glycan. The Zn(2+) site is built by H174 and D186. Catalysis depends on E220, which acts as the Proton acceptor. E221 provides a ligand contact to Zn(2+). A glycan (N-linked (GlcNAc...) asparagine) is linked at N237. The Zn(2+) site is built by E246 and H319. Residues L391–I411 form a helical membrane-spanning segment. At A412–T446 the chain is on the cytoplasmic side. The helical transmembrane segment at P447–I467 threads the bilayer. The Vacuolar portion of the chain corresponds to N468–S474. A helical membrane pass occupies residues S475–A495. Topologically, residues R496 to R508 are cytoplasmic. The chain crosses the membrane as a helical span at residues A509–Y529. Over A530 to K533 the chain is Vacuolar. Residues G534–V554 traverse the membrane as a helical segment. The Cytoplasmic portion of the chain corresponds to S555–W671. A disordered region spans residues R579 to S620. Residues I672 to L692 form a helical membrane-spanning segment. Residues L693–F708 are Vacuolar-facing. Residues I709–I729 form a helical membrane-spanning segment. The Cytoplasmic portion of the chain corresponds to H730 to V736. The chain crosses the membrane as a helical span at residues P737 to F757. The Vacuolar segment spans residues S758–Q992. N-linked (GlcNAc...) asparagine glycosylation is found at N805, N846, and N954.

It belongs to the peptidase M28 family. Zn(2+) serves as cofactor.

The protein localises to the vacuole membrane. Its function is as follows. May be involved in vacuolar sorting and osmoregulation. The protein is Vacuolar membrane protease of Paracoccidioides brasiliensis (strain Pb18).